The primary structure comprises 386 residues: Succinate--CoA ligase [ADP-forming] subunit beta (386 aa).

The ATP-grasp domain maps to 9-244 (KDLLASYDVP…PSQENVRDVL (236 aa)). Residues lysine 46, 53 to 55 (GRG), valine 102, and glutamate 107 each bind ATP. 2 residues coordinate Mg(2+): asparagine 199 and aspartate 213. Substrate-binding positions include asparagine 264 and 321–323 (GIM).

This sequence belongs to the succinate/malate CoA ligase beta subunit family. In terms of assembly, heterotetramer of two alpha and two beta subunits. The cofactor is Mg(2+).

The enzyme catalyses succinate + ATP + CoA = succinyl-CoA + ADP + phosphate. It catalyses the reaction GTP + succinate + CoA = succinyl-CoA + GDP + phosphate. It functions in the pathway carbohydrate metabolism; tricarboxylic acid cycle; succinate from succinyl-CoA (ligase route): step 1/1. In terms of biological role, succinyl-CoA synthetase functions in the citric acid cycle (TCA), coupling the hydrolysis of succinyl-CoA to the synthesis of either ATP or GTP and thus represents the only step of substrate-level phosphorylation in the TCA. The beta subunit provides nucleotide specificity of the enzyme and binds the substrate succinate, while the binding sites for coenzyme A and phosphate are found in the alpha subunit. The chain is Succinate--CoA ligase [ADP-forming] subunit beta from Chlamydia pneumoniae (Chlamydophila pneumoniae).